The following is a 216-amino-acid chain: MLDREGFRPNVGIILLNAHNEVFWGKRLREHSWQFPQGGIKYGETPMQAMYRELHEETGLLPEHVKIIGRTRDWLRYEVPDKFIKREVRGHYRGQKQIWFLLRMVGRDCDICLRATDHPEFDAWRWNEYWVPLDAVIEFKRDVYQLALTELSRFLRRPAQRTDKSRGPRAPRYPRVANGHAASEAPAAIDTSAVCSEVEPGANALDETPPRVSLRD.

Positions 6 to 149 (GFRPNVGIIL…KRDVYQLALT (144 aa)) constitute a Nudix hydrolase domain. Residues 38–59 (GGIKYGETPMQAMYRELHEETG) carry the Nudix box motif. The disordered stretch occupies residues 159–188 (AQRTDKSRGPRAPRYPRVANGHAASEAPAA).

Belongs to the Nudix hydrolase family. RppH subfamily. It depends on a divalent metal cation as a cofactor.

Functionally, accelerates the degradation of transcripts by removing pyrophosphate from the 5'-end of triphosphorylated RNA, leading to a more labile monophosphorylated state that can stimulate subsequent ribonuclease cleavage. This Burkholderia mallei (strain NCTC 10247) protein is RNA pyrophosphohydrolase.